A 394-amino-acid polypeptide reads, in one-letter code: UDP-glucose 6-dehydrogenase (394 aa).

NAD(+) is bound by residues 2-19 (KIAI…AVLL), V11, D29, K34, T83, T118, and E145. Substrate contacts are provided by residues 141-145 (EFLRE), K203, N207, 248-252 (YNNPS), and G256. An NAD(+)-binding site is contributed by Y258. Residue C259 is the Nucleophile of the active site. K262 serves as a coordination point for NAD(+). Residue K313 participates in substrate binding. R320 contributes to the NAD(+) binding site.

The protein belongs to the UDP-glucose/GDP-mannose dehydrogenase family.

The enzyme catalyses UDP-alpha-D-glucose + 2 NAD(+) + H2O = UDP-alpha-D-glucuronate + 2 NADH + 3 H(+). It functions in the pathway nucleotide-sugar biosynthesis; UDP-alpha-D-glucuronate biosynthesis; UDP-alpha-D-glucuronate from UDP-alpha-D-glucose: step 1/1. Catalyzes the formation of UDP-glucuronic acid which is required for capsular hyaluronic acid synthesis. Directly responsible for the transformation of some unencapsulated serotype-3 SP mutants to the encapsulated phenotype. This is UDP-glucose 6-dehydrogenase (cap3A) from Streptococcus pneumoniae.